The following is a 360-amino-acid chain: Terpene synthase 5 (360 aa).

Residues 87-92 (DDFLER) carry the DDxx(x)D/E motif motif. An NDxxSxxxD/E motif motif is present at residues 237-245 (NDCVSYAKE).

It belongs to the terpene synthase family.

Its function is as follows. Terpene synthase that converts its substrate farnesyl diphosphate (FPP) into 2 yet unidentified sesquiterpenes. This Dictyostelium purpureum (Slime mold) protein is Terpene synthase 5.